A 72-amino-acid chain; its full sequence is Protein RALF-like 20 (72 aa).

Positions 1–27 are cleaved as a signal peptide; it reads MVLSKKTIMQSFALMIILSIVMSTTEA. Cystine bridges form between Cys-43/Cys-51 and Cys-63/Cys-69.

This sequence belongs to the plant rapid alkalinization factor (RALF) family.

The protein resides in the secreted. Cell signaling peptide that may regulate plant stress, growth, and development. Mediates a rapid alkalinization of extracellular space by mediating a transient increase in the cytoplasmic Ca(2+) concentration leading to a calcium-dependent signaling events through a cell surface receptor and a concomitant activation of some intracellular mitogen-activated protein kinases. This chain is Protein RALF-like 20 (RALFL20), found in Arabidopsis thaliana (Mouse-ear cress).